The primary structure comprises 265 residues: MIKWPWKVQESAHQTALPWQEALSIPLLTCLTEQEQSKLVALAERFLQQKRLVPLQGFELNSLRSCRIALLFCLPVLELGLEWLDGFHEVLIYPAPFVVDDEWEDDIGLVHNQRIVQSGQSWQQGPIVLNWLDIQDSFDASGFNLIIHEVAHKLDTRNGDRASGVPFISLREVAGWEHDLHAAMNNIQEEIELVGENAASIDAYAASDPAECFAVLSEYFFSAPELFAPRFPSLWQRFCQFYQQDPLQRLHHANDTDSFSATNVH.

Residues His-111, His-148, His-152, and Glu-211 each contribute to the Zn(2+) site.

The protein belongs to the MtfA family. Interacts with Mlc. Zn(2+) is required as a cofactor.

It is found in the cytoplasm. Functionally, involved in the modulation of the activity of the glucose-phosphotransferase system (glucose-PTS). Interacts with the transcriptional repressor Mlc, preventing its interaction with DNA and leading to the modulation of expression of genes regulated by Mlc, including ptsG, which encodes the PTS system glucose-specific EIICB component. In terms of biological role, shows zinc-dependent metallopeptidase activity. The chain is Mlc titration factor A from Escherichia coli O6:K15:H31 (strain 536 / UPEC).